Here is a 339-residue protein sequence, read N- to C-terminus: Probable long-chain-alcohol O-fatty-acyltransferase 7 (339 aa).

7 helical membrane passes run 7–27, 39–59, 113–133, 143–163, 226–246, 254–274, and 287–307; these read SLINVGFLTIISVSYCYCLPP, IFPVCVLLVVLPLFFSFSIFT, HLSTYVFPVKIAIFVVLLYVH, FLLCLHPLYVYLLLEILLTLL, MLIGVFATFVTSGVAHEVVFF, TGEVALFFLLHGVCTVAEVAA, and PVVSWMFTIAFVNVTAGWLFF.

This sequence belongs to the wax synthase family.

The protein resides in the membrane. It carries out the reaction a long chain fatty alcohol + a fatty acyl-CoA = a wax ester + CoA. Its function is as follows. Catalyzes the final step in the synthesis of long-chain linear esters (waxes). The protein is Probable long-chain-alcohol O-fatty-acyltransferase 7 (AT7) of Arabidopsis thaliana (Mouse-ear cress).